Here is a 345-residue protein sequence, read N- to C-terminus: Photosystem II protein D1 (345 aa).

Helical transmembrane passes span 30 to 47, 119 to 134, and 143 to 157; these read YVGWFGVLMIPTLLTAAT, HFFIGICSYMGREWEL, and WIAVAYSAPVAAASA. H119 contributes to the chlorophyll a binding site. Y127 lines the pheophytin a pocket. [CaMn4O5] cluster is bound by residues D171 and E190. The helical transmembrane segment at 198 to 219 threads the bilayer; the sequence is FHMLGVAGVFGGSLFSAMHGSL. Residue H199 coordinates chlorophyll a. A quinone is bound by residues H216 and 265–266; that span reads SF. Residue H216 coordinates Fe cation. H273 provides a ligand contact to Fe cation. The helical transmembrane segment at 275 to 289 threads the bilayer; it reads FLAVWPVVGIWFTAL. [CaMn4O5] cluster-binding residues include H333, E334, D343, and A345.

This sequence belongs to the reaction center PufL/M/PsbA/D family. PSII is composed of 1 copy each of membrane proteins PsbA, PsbB, PsbC, PsbD, PsbE, PsbF, PsbH, PsbI, PsbJ, PsbK, PsbL, PsbM, PsbT, PsbY, PsbZ, Psb30/Ycf12, at least 3 peripheral proteins of the oxygen-evolving complex and a large number of cofactors. It forms dimeric complexes. The D1/D2 heterodimer binds P680, chlorophylls that are the primary electron donor of PSII, and subsequent electron acceptors. It shares a non-heme iron and each subunit binds pheophytin, quinone, additional chlorophylls, carotenoids and lipids. D1 provides most of the ligands for the Mn4-Ca-O5 cluster of the oxygen-evolving complex (OEC). There is also a Cl(-1) ion associated with D1 and D2, which is required for oxygen evolution. The PSII complex binds additional chlorophylls, carotenoids and specific lipids. serves as cofactor. Tyr-162 forms a radical intermediate that is referred to as redox-active TyrZ, YZ or Y-Z.

It localises to the plastid. The protein resides in the chloroplast thylakoid membrane. The catalysed reaction is 2 a plastoquinone + 4 hnu + 2 H2O = 2 a plastoquinol + O2. In terms of biological role, photosystem II (PSII) is a light-driven water:plastoquinone oxidoreductase that uses light energy to abstract electrons from H(2)O, generating O(2) and a proton gradient subsequently used for ATP formation. It consists of a core antenna complex that captures photons, and an electron transfer chain that converts photonic excitation into a charge separation. The D1/D2 (PsbA/PsbD) reaction center heterodimer binds P680, the primary electron donor of PSII as well as several subsequent electron acceptors. This is Photosystem II protein D1 from Euglena gracilis.